We begin with the raw amino-acid sequence, 199 residues long: MLKLKICGIKDEKNAKDLAFLNIDFFGFIFAKSPRRVSLEQARNLSAIFHEKDKKVVGVFVDENLEQILRCIKEAKLDGIQIYRTITKEEFEILKVQNVFVWQVISVENSLDLKSEIFANLVLFDAKGILKGGNGISFDWTLLGSYTKDFILAGGIGLDNVHKAVQTGAKILDLNSKLEDEKGLKDINKIKQILKELKK.

The protein belongs to the TrpF family.

The catalysed reaction is N-(5-phospho-beta-D-ribosyl)anthranilate = 1-(2-carboxyphenylamino)-1-deoxy-D-ribulose 5-phosphate. Its pathway is amino-acid biosynthesis; L-tryptophan biosynthesis; L-tryptophan from chorismate: step 3/5. This chain is N-(5'-phosphoribosyl)anthranilate isomerase, found in Campylobacter jejuni subsp. jejuni serotype O:6 (strain 81116 / NCTC 11828).